The following is a 443-amino-acid chain: Cell division protein FtsA (443 aa).

Belongs to the FtsA/MreB family. As to quaternary structure, self-interacts. Interacts with FtsZ.

The protein localises to the cell inner membrane. Its function is as follows. Cell division protein that is involved in the assembly of the Z ring. May serve as a membrane anchor for the Z ring. This Agrobacterium fabrum (strain C58 / ATCC 33970) (Agrobacterium tumefaciens (strain C58)) protein is Cell division protein FtsA.